The sequence spans 319 residues: Dehydrogenase/reductase SDR family member 9 (319 aa).

An N-terminal signal peptide occupies residues 1 to 17 (MLFWLLVLLILCGFLWN). Residues 34–58 (ITGC…HVIA) and Asp-83 contribute to the NAD(+) site. Position 164 (Ser-164) interacts with substrate. Tyr-176 functions as the Proton acceptor in the catalytic mechanism. Lys-180 provides a ligand contact to NAD(+).

Belongs to the short-chain dehydrogenases/reductases (SDR) family. In terms of assembly, homotetramer.

Its subcellular location is the microsome membrane. The protein localises to the endoplasmic reticulum membrane. It carries out the reaction 3beta-hydroxy-5alpha-pregnane-20-one + NAD(+) = 5alpha-pregnane-3,20-dione + NADH + H(+). The enzyme catalyses 17beta-hydroxy-5alpha-androstan-3-one + NAD(+) = 5alpha-androstan-3,17-dione + NADH + H(+). The catalysed reaction is androsterone + NAD(+) = 5alpha-androstan-3,17-dione + NADH + H(+). It catalyses the reaction 5alpha-androstane-3alpha,17beta-diol + NAD(+) = 17beta-hydroxy-5alpha-androstan-3-one + NADH + H(+). It carries out the reaction all-trans-retinol + NAD(+) = all-trans-retinal + NADH + H(+). The enzyme catalyses 3alpha-hydroxy-5alpha-pregnan-20-one + NAD(+) = 5alpha-pregnane-3,20-dione + NADH + H(+). In terms of biological role, 3-alpha-hydroxysteroid dehydrogenase that converts 3-alpha-tetrahydroprogesterone (allopregnanolone) to dihydroxyprogesterone and 3-alpha-androstanediol to dihydroxyprogesterone. Also plays a role in the biosynthesis of retinoic acid from retinaldehyde. Can utilize both NADH and NADPH. The sequence is that of Dehydrogenase/reductase SDR family member 9 (DHRS9) from Bos taurus (Bovine).